Consider the following 275-residue polypeptide: Calcium-binding protein 4 (275 aa).

The segment covering 1-12 has biased composition (polar residues); the sequence is MTTEQARGQQGP. The disordered stretch occupies residues 1–112; sequence MTTEQARGQQ…SLHDAAQRTY (112 aa). The span at 38–55 shows a compositional bias: basic residues; the sequence is TRKRSKKERGLRGSRKRT. Ser42 is subject to Phosphoserine. EF-hand domains lie at 129 to 164, 183 to 200, 206 to 241, and 243 to 275; these read EELDELQAAFEEFDTDRDGYISHRELGDCMRTLGYM, GRVDFEEFVELIGPKLRE, LGVRELRIAFREFDRDRDGRITVAELREAVPALLGE, and LAGPELDEMLREVDLNGDGTVDFDEFVMMLSRH. Ca(2+) is bound by residues Asp142, Asp144, Asp146, Tyr148, and Glu153. Residues Asp219, Asp221, Asp223, Arg225, Glu230, Asp256, Asn258, Asp260, Thr262, and Glu267 each contribute to the Ca(2+) site.

Interacts with CACNA1F and CACNA1D (via IQ domain) in a calcium independent manner. Interacts (via N-terminus) with UNC119. Phosphorylated. Phosphorylation levels change with the light conditions and regulate the activity. In terms of tissue distribution, expressed in retina and in the inner hair cells (IHC) of the cochlea.

It is found in the cytoplasm. It localises to the presynapse. Functionally, involved in normal synaptic function through regulation of Ca(2+) influx and neurotransmitter release in photoreceptor synaptic terminals and in auditory transmission. Modulator of CACNA1D and CACNA1F, suppressing the calcium-dependent inactivation and shifting the activation range to more hyperpolarized voltages. The chain is Calcium-binding protein 4 (CABP4) from Homo sapiens (Human).